The following is a 129-amino-acid chain: C-type natriuretic peptide 1 (129 aa).

The first 24 residues, Met1–Gly24, serve as a signal peptide directing secretion. A propeptide spanning residues Lys25–Lys107 is cleaved from the precursor. The cysteines at positions 113 and 129 are disulfide-linked.

This sequence belongs to the natriuretic peptide family.

It localises to the secreted. Its function is as follows. Hormone which plays a role in endochondral ossification through regulation of cartilaginous growth plate chondrocytes proliferation and differentiation. May also be vasoactive and natriuretic. May be important for freshwater adaptation. The polypeptide is C-type natriuretic peptide 1 (Aquarana catesbeiana (American bullfrog)).